The chain runs to 363 residues: NAD(P)H-quinone oxidoreductase subunit 1, chloroplastic (363 aa).

The next 6 helical transmembrane spans lie at 30 to 50 (LVPI…IVWL), 98 to 118 (FSIG…VIPF), 129 to 149 (IGIF…LMSG), 248 to 268 (YSGI…LLSS), 300 to 320 (IIGT…FLFI), and 343 to 363 (FLLP…LLSL).

It belongs to the complex I subunit 1 family. In terms of assembly, NDH is composed of at least 16 different subunits, 5 of which are encoded in the nucleus.

The protein resides in the plastid. The protein localises to the chloroplast thylakoid membrane. The enzyme catalyses a plastoquinone + NADH + (n+1) H(+)(in) = a plastoquinol + NAD(+) + n H(+)(out). It carries out the reaction a plastoquinone + NADPH + (n+1) H(+)(in) = a plastoquinol + NADP(+) + n H(+)(out). NDH shuttles electrons from NAD(P)H:plastoquinone, via FMN and iron-sulfur (Fe-S) centers, to quinones in the photosynthetic chain and possibly in a chloroplast respiratory chain. The immediate electron acceptor for the enzyme in this species is believed to be plastoquinone. Couples the redox reaction to proton translocation, and thus conserves the redox energy in a proton gradient. This is NAD(P)H-quinone oxidoreductase subunit 1, chloroplastic from Gossypium barbadense (Sea Island cotton).